The sequence spans 92 residues: PqqA binding protein (92 aa).

The protein belongs to the PqqD family. As to quaternary structure, monomer. Interacts with PqqE.

It functions in the pathway cofactor biosynthesis; pyrroloquinoline quinone biosynthesis. Functionally, functions as a PqqA binding protein and presents PqqA to PqqE, in the pyrroloquinoline quinone (PQQ) biosynthetic pathway. The protein is PqqA binding protein of Xanthomonas oryzae pv. oryzae (strain MAFF 311018).